Reading from the N-terminus, the 84-residue chain is UPF0473 protein CLJ_B2791 (84 aa).

It belongs to the UPF0473 family.

The protein is UPF0473 protein CLJ_B2791 of Clostridium botulinum (strain 657 / Type Ba4).